The sequence spans 212 residues: Adenylate kinase (212 aa).

Residue 14–19 participates in ATP binding; it reads GSGKGT. An NMP region spans residues 34-63; the sequence is STGDLFRKKISEDSQFAAQIQNYLSSGSYV. Residues Thr35, Arg40, 61–63, 89–92, and Gln96 contribute to the AMP site; these read SYV and GYPR. The tract at residues 126-163 is LID; the sequence is QRLFCQKCQKSYNLLLAKPKNELKCDLDSTDLITRNDD. Residue Arg127 coordinates ATP. The Zn(2+) site is built by Cys130 and Cys133. 136 to 137 serves as a coordination point for ATP; sequence SY. The Zn(2+) site is built by Cys150 and Asp153. AMP-binding residues include Arg160 and Arg171. Gln199 contacts ATP.

It belongs to the adenylate kinase family. Monomer.

It is found in the cytoplasm. It catalyses the reaction AMP + ATP = 2 ADP. The protein operates within purine metabolism; AMP biosynthesis via salvage pathway; AMP from ADP: step 1/1. Its function is as follows. Catalyzes the reversible transfer of the terminal phosphate group between ATP and AMP. Plays an important role in cellular energy homeostasis and in adenine nucleotide metabolism. This is Adenylate kinase from Mesomycoplasma hyopneumoniae (strain J / ATCC 25934 / NCTC 10110) (Mycoplasma hyopneumoniae).